A 232-amino-acid polypeptide reads, in one-letter code: Ribonuclease 3 (232 aa).

Positions 5 to 134 constitute an RNase III domain; the sequence is QTVLKNHFAI…FLGALLLDKD (130 aa). Position 47 (glutamate 47) interacts with Mg(2+). Residue aspartate 51 is part of the active site. Mg(2+) contacts are provided by aspartate 120 and glutamate 123. Residue glutamate 123 is part of the active site. A DRBM domain is found at 160–229; sequence DYKTHLQELL…AKNAVEKGLD (70 aa).

This sequence belongs to the ribonuclease III family. In terms of assembly, homodimer. Requires Mg(2+) as cofactor.

Its subcellular location is the cytoplasm. The enzyme catalyses Endonucleolytic cleavage to 5'-phosphomonoester.. In terms of biological role, digests double-stranded RNA. Involved in the processing of primary rRNA transcript to yield the immediate precursors to the large and small rRNAs (23S and 16S). Processes some mRNAs, and tRNAs when they are encoded in the rRNA operon. Processes pre-crRNA and tracrRNA of type II CRISPR loci if present in the organism. The sequence is that of Ribonuclease 3 from Streptococcus pneumoniae (strain Taiwan19F-14).